The sequence spans 653 residues: Polyadenylate-binding protein, cytoplasmic and nuclear (653 aa).

Residues 1 to 10 show a composition bias toward basic and acidic residues; the sequence is MPSTDLKKQA. A disordered region spans residues 1–77; that stretch reads MPSTDLKKQA…SVATPSGTAP (77 aa). The segment covering 17–27 has biased composition (polar residues); that stretch reads DVNTNNEAVES. Over residues 53–68 the composition is skewed to low complexity; it reads AAEPSESTSTPTNASS. The RRM 1 domain maps to 80-158; the sequence is ASLYVGELDP…RPCRIMWSQR (79 aa). Threonine 167 carries the phosphothreonine modification. RRM domains follow at residues 168–245, 261–338, and 364–441; these read GNVF…HHVS, TNVY…RAQK, and VNLF…LAQR. In terms of domain architecture, PABC spans 569 to 646; sequence PERFTAADLA…AIGVLQEFVD (78 aa).

Belongs to the polyadenylate-binding protein type-1 family. As to quaternary structure, interacts with cid13.

Its subcellular location is the cytoplasm. It localises to the nucleus. Functionally, binds the poly(A) tail of mRNA. Appears to be an important mediator of the multiple roles of the poly(A) tail in mRNA biogenesis, stability and translation. In the nucleus, involved in both mRNA cleavage and polyadenylation. Is also required for efficient mRNA export to the cytoplasm. Acts in concert with a poly(A)-specific nuclease (PAN) to affect poly(A) tail shortening, which may occur concomitantly with either nucleocytoplasmic mRNA transport or translational initiation. In the cytoplasm, stimulates translation initiation and regulates mRNA decay through translation termination-coupled poly(A) shortening, probably mediated by PAN. In Schizosaccharomyces pombe (strain 972 / ATCC 24843) (Fission yeast), this protein is Polyadenylate-binding protein, cytoplasmic and nuclear (pab1).